Consider the following 119-residue polypeptide: Large ribosomal subunit protein uL18 (119 aa).

The protein belongs to the universal ribosomal protein uL18 family. Part of the 50S ribosomal subunit; part of the 5S rRNA/L5/L18/L25 subcomplex. Contacts the 5S and 23S rRNAs.

Functionally, this is one of the proteins that bind and probably mediate the attachment of the 5S RNA into the large ribosomal subunit, where it forms part of the central protuberance. The polypeptide is Large ribosomal subunit protein uL18 (Borrelia duttonii (strain Ly)).